The chain runs to 617 residues: Probable endochitinase (617 aa).

Positions 53 to 426 (YIRPCYFTNW…SVIAKELGGV (374 aa)) constitute a GH18 domain. A disulfide bridge links Cys57 with Cys82. Residues 109–110 (DW) and 136–139 (GGWS) each bind chitin. The active-site Proton donor is the Glu179. Chitin-binding positions include Tyr180 and 245 to 248 (MSYD). The N-linked (GlcNAc...) asparagine glycan is linked to Asn310. Trp394 provides a ligand contact to chitin. Chitin-binding type-2 domains follow at residues 478–534 (TNVC…GCSV) and 563–617 (AFKC…KCAK). Intrachain disulfides connect Cys511–Cys524 and Cys594–Cys607.

It belongs to the glycosyl hydrolase 18 family. Chitinase class II subfamily.

It catalyses the reaction Random endo-hydrolysis of N-acetyl-beta-D-glucosaminide (1-&gt;4)-beta-linkages in chitin and chitodextrins.. The protein is Probable endochitinase (cht-1) of Caenorhabditis elegans.